Consider the following 176-residue polypeptide: NAD(P)H-quinone oxidoreductase subunit 6, chloroplastic (176 aa).

5 helical membrane passes run 10-30, 32-52, 61-81, 95-115, and 152-172; these read FLLV…VLFP, PIFS…LYIL, AQLL…VMFM, VGDG…ISTI, and FFLP…GAIS.

This sequence belongs to the complex I subunit 6 family. As to quaternary structure, NDH is composed of at least 16 different subunits, 5 of which are encoded in the nucleus.

It is found in the plastid. The protein resides in the chloroplast thylakoid membrane. The enzyme catalyses a plastoquinone + NADH + (n+1) H(+)(in) = a plastoquinol + NAD(+) + n H(+)(out). It carries out the reaction a plastoquinone + NADPH + (n+1) H(+)(in) = a plastoquinol + NADP(+) + n H(+)(out). Its function is as follows. NDH shuttles electrons from NAD(P)H:plastoquinone, via FMN and iron-sulfur (Fe-S) centers, to quinones in the photosynthetic chain and possibly in a chloroplast respiratory chain. The immediate electron acceptor for the enzyme in this species is believed to be plastoquinone. Couples the redox reaction to proton translocation, and thus conserves the redox energy in a proton gradient. This is NAD(P)H-quinone oxidoreductase subunit 6, chloroplastic (ndhG) from Aethionema cordifolium (Lebanon stonecress).